We begin with the raw amino-acid sequence, 2147 residues long: Non-reducing polyketide synthase albA (2147 aa).

Positions 8–244 (YLFGDQTSDI…VKAPIHGPYH (237 aa)) are N-terminal acylcarrier protein transacylase domain (SAT). The Ketosynthase family 3 (KS3) domain maps to 375 to 806 (CSKIAIIGMS…GGNTAILLED (432 aa)). Catalysis depends on for beta-ketoacyl synthase activity residues Cys-547, His-682, and His-724. The segment at 912–1232 (FVFTGQGAQY…LSSLHLAGID (321 aa)) is malonyl-CoA:ACP transacylase (MAT) domain. The active-site For acyl/malonyl transferase activity is the Ser-1001. Positions 1286–1425 (HEFLTTAAQK…CTVRFFDCAA (140 aa)) are N-terminal hotdog fold. A PKS/mFAS DH domain is found at 1286 to 1598 (HEFLTTAAQK…FQGLSRKILD (313 aa)). Positions 1290–1603 (TTAAQKVIET…RKILDTVLPP (314 aa)) are product template (PT) domain. The active-site Proton acceptor; for dehydratase activity is His-1326. The tract at residues 1452–1598 (DAHRLGRGMV…FQGLSRKILD (147 aa)) is C-terminal hotdog fold. Asp-1511 acts as the Proton donor; for dehydratase activity in catalysis. The interval 1608-1637 (KGPARPAASAQKAAPAATSKSRASAPAPAK) is disordered. The span at 1610 to 1637 (PARPAASAQKAAPAATSKSRASAPAPAK) shows a compositional bias: low complexity. Positions 1642 to 1719 (PSAPSLVKRA…DFKQFLAPMS (78 aa)) constitute a Carrier 1 domain. Position 1679 is an O-(pantetheine 4'-phosphoryl)serine (Ser-1679). A disordered region spans residues 1719–1759 (SQGEASDGSTSDPESSSSFNGGSSTDESSAGSPVSSPPNEK). The span at 1724-1747 (SDGSTSDPESSSSFNGGSSTDESS) shows a compositional bias: low complexity. The region spanning 1760–1837 (IEQHATMKEI…DVEDALGLKP (78 aa)) is the Carrier 2 domain. Ser-1797 is subject to O-(pantetheine 4'-phosphoryl)serine. Positions 1873 to 2145 (SPHPRSTSIL…ELGSFIGNAM (273 aa)) are claisen cyclase domain. The active-site For Claisen cyclase activity is the Ser-1963.

The catalysed reaction is 6 malonyl-CoA + acetyl-CoA + 6 H(+) = naphtopyrone YWA1 + 6 CO2 + 7 CoA + H2O. The protein operates within secondary metabolite biosynthesis. In terms of biological role, non-reducing polyketide synthase involved in the biosynthesis of bifonsecin B, a dimeric gamma-naphthopyrone. The first step in the biosynthesis of bifonsecin B is the production of gamma-naphthopyrone precursor YWA1 by the non-reducing polyketide synthase albA, via condensation of one acetyl-CoA starter unit with 6 malonyl-CoA units. YWA1 is then methylated by bfoE at position C-6 to yield foncesin which is further methylated at position C-8 by bfoD to produce fonsecin B. A key enzyme in the biosynthetic pathway is the cytochrome P450 monooxygenase bfoB which catalyzes the oxidative dimerization of fonsecin B to bifonsecin B. Bfob also catalyzes the oxidative dimerization of rubrofusarin B into nigerone. The stereoselectivity of bfoB is influenced by the two natural monomeric substrates; homodimerization of fonsecin B yields a stereochemically pure biaryl, M-foncerine B, while rubrofusarin B yields a mixture of enantiomers M- and P-nigerone. The chain is Non-reducing polyketide synthase albA from Aspergillus brasiliensis (strain CBS 101740 / IMI 381727 / IBT 21946).